The chain runs to 424 residues: Dihydroorotase (424 aa).

Residues histidine 61 and histidine 63 each coordinate Zn(2+). Substrate is bound by residues histidine 63 to arginine 65 and asparagine 95. Residues aspartate 153, histidine 180, and histidine 233 each coordinate Zn(2+). Substrate is bound at residue asparagine 279. Position 306 (aspartate 306) interacts with Zn(2+). Aspartate 306 is a catalytic residue. Position 310 (histidine 310) interacts with substrate.

Belongs to the metallo-dependent hydrolases superfamily. DHOase family. Class I DHOase subfamily. Requires Zn(2+) as cofactor.

The enzyme catalyses (S)-dihydroorotate + H2O = N-carbamoyl-L-aspartate + H(+). It participates in pyrimidine metabolism; UMP biosynthesis via de novo pathway; (S)-dihydroorotate from bicarbonate: step 3/3. Its function is as follows. Catalyzes the reversible cyclization of carbamoyl aspartate to dihydroorotate. This is Dihydroorotase from Geobacter metallireducens (strain ATCC 53774 / DSM 7210 / GS-15).